The following is a 200-amino-acid chain: LexA repressor (200 aa).

Positions 28-48 (RAEIARILGFKSANAAEEHIK) form a DNA-binding region, H-T-H motif. Active-site for autocatalytic cleavage activity residues include serine 118 and lysine 155.

It belongs to the peptidase S24 family. In terms of assembly, homodimer.

It catalyses the reaction Hydrolysis of Ala-|-Gly bond in repressor LexA.. Functionally, represses a number of genes involved in the response to DNA damage (SOS response), including recA and lexA. In the presence of single-stranded DNA, RecA interacts with LexA causing an autocatalytic cleavage which disrupts the DNA-binding part of LexA, leading to derepression of the SOS regulon and eventually DNA repair. In Cellvibrio japonicus (strain Ueda107) (Pseudomonas fluorescens subsp. cellulosa), this protein is LexA repressor.